The sequence spans 119 residues: Large ribosomal subunit protein bL20 (119 aa).

The protein belongs to the bacterial ribosomal protein bL20 family.

In terms of biological role, binds directly to 23S ribosomal RNA and is necessary for the in vitro assembly process of the 50S ribosomal subunit. It is not involved in the protein synthesizing functions of that subunit. The chain is Large ribosomal subunit protein bL20 from Jannaschia sp. (strain CCS1).